A 440-amino-acid polypeptide reads, in one-letter code: Protein TENP (440 aa).

Expressed in developing retina and brain, but not in heart, liver or kidney. In brain, located in a narrow strip in the boundary between the ventricular zone (consisting of proliferating cells) and the intermediate zone (consisting of postmitotic, differentiating cells). Expressed in all major regions of the developing brain, including the myelencephalon, the mesencephalon, the telencephalon and the diencephalon. In the developing retina, expression is scattered across the retinal neural epithelium. Expressed in egg white (at protein level). Expressed in the magnum of the oviduct (at protein level).

May play a role in the developmental transition from cell proliferation to cell differentiation during neurogenesis. The protein is Protein TENP (TENP) of Gallus gallus (Chicken).